The sequence spans 162 residues: Auracyanin-A (162 aa).

A signal peptide spans 1 to 22; it reads MKITLRMMVLAVLTAMAMVLAA. The N-palmitoyl cysteine moiety is linked to residue Cys23. The S-diacylglycerol cysteine moiety is linked to residue Cys23. The Plastocyanin-like domain occupies 42 to 162; that stretch reads VTIEIGSKGE…PLMQGKLVVN (121 aa). The Cu cation site is built by His81, Cys146, His151, and Met155.

Monomer. The cofactor is Cu cation.

It localises to the cell membrane. Its function is as follows. Probably a soluble electron acceptor for the integral membrane protein electron transfer alternative complex III (ACIII). The protein is Auracyanin-A of Chloroflexus aurantiacus (strain ATCC 29366 / DSM 635 / J-10-fl).